Reading from the N-terminus, the 117-residue chain is Immunoglobulin heavy variable 5-10-1 (117 aa).

The signal sequence occupies residues 1 to 19; that stretch reads MGSTAILALLLAVLQGVCA. The framework-1 stretch occupies residues 20–44; that stretch reads EVQLVQSGAEVKKPGESLRISCKGS. The Ig-like domain occupies 20 to 117; sequence EVQLVQSGAE…SDTAMYYCAR (98 aa). Cys-41 and Cys-115 are disulfide-bonded. Residues 45 to 52 are complementarity-determining-1; the sequence is GYSFTSYW. A framework-2 region spans residues 53–69; sequence ISWVRQMPGKGLEWMGR. Residues 70–77 are complementarity-determining-2; it reads IDPSDSYT. Positions 78-115 are framework-3; the sequence is NYSPSFQGHVTISADKSISTAYLQWSSLKASDTAMYYC. The complementarity-determining-3 stretch occupies residues 116–117; that stretch reads AR.

Immunoglobulins are composed of two identical heavy chains and two identical light chains; disulfide-linked.

Its subcellular location is the secreted. The protein resides in the cell membrane. In terms of biological role, v region of the variable domain of immunoglobulin heavy chains that participates in the antigen recognition. Immunoglobulins, also known as antibodies, are membrane-bound or secreted glycoproteins produced by B lymphocytes. In the recognition phase of humoral immunity, the membrane-bound immunoglobulins serve as receptors which, upon binding of a specific antigen, trigger the clonal expansion and differentiation of B lymphocytes into immunoglobulins-secreting plasma cells. Secreted immunoglobulins mediate the effector phase of humoral immunity, which results in the elimination of bound antigens. The antigen binding site is formed by the variable domain of one heavy chain, together with that of its associated light chain. Thus, each immunoglobulin has two antigen binding sites with remarkable affinity for a particular antigen. The variable domains are assembled by a process called V-(D)-J rearrangement and can then be subjected to somatic hypermutations which, after exposure to antigen and selection, allow affinity maturation for a particular antigen. In Homo sapiens (Human), this protein is Immunoglobulin heavy variable 5-10-1.